A 522-amino-acid polypeptide reads, in one-letter code: Sulfite reductase [NADPH] flavoprotein alpha-component (522 aa).

A Flavodoxin-like domain is found at 60–198 (ITILFGSQTG…DTERWSSDAL (139 aa)). The disordered stretch occupies residues 217 to 242 (TLRSHQDLRSHQEQSRNRARPYDKDN). Over residues 220-242 (SHQDLRSHQEQSRNRARPYDKDN) the composition is skewed to basic and acidic residues. Positions 241 to 399 (DNPYTATLLE…VAPYRAFLQQ (159 aa)) constitute an FAD-binding FR-type domain.

As to quaternary structure, alpha(8)-beta(8). The alpha component is a flavoprotein, the beta component is a hemoprotein. FAD serves as cofactor. The cofactor is FMN.

The enzyme catalyses hydrogen sulfide + 3 NADP(+) + 3 H2O = sulfite + 3 NADPH + 4 H(+). In terms of biological role, catalyzes the 6-electron reduction of sulfite to sulfide. This is one of several activities required for the biosynthesis of L-cysteine from sulfate. The flavo-protein component catalyzes the electron flow from NADPH -&gt; FAD -&gt; FMN to the hemoprotein component. The chain is Sulfite reductase [NADPH] flavoprotein alpha-component (cysJ) from Thiocapsa roseopersicina.